Reading from the N-terminus, the 90-residue chain is Small ribosomal subunit protein uS17 (90 aa).

The protein belongs to the universal ribosomal protein uS17 family. Part of the 30S ribosomal subunit.

Its function is as follows. One of the primary rRNA binding proteins, it binds specifically to the 5'-end of 16S ribosomal RNA. The polypeptide is Small ribosomal subunit protein uS17 (Burkholderia thailandensis (strain ATCC 700388 / DSM 13276 / CCUG 48851 / CIP 106301 / E264)).